Reading from the N-terminus, the 654-residue chain is C6 finger domain transcription factor nscR (654 aa).

Positions 17–43 (CELCRERKVKCDKLDPCTNCSSAGVIC) form a DNA-binding region, zn(2)-C6 fungal-type.

Its subcellular location is the nucleus. Transcription factor that specifically regulates the neosartoricin B biosynthesis gene cluster. The chain is C6 finger domain transcription factor nscR from Trichophyton verrucosum (strain HKI 0517).